Consider the following 175-residue polypeptide: Protein FanH (175 aa).

Residues 1–20 form the signal peptide; sequence MIKKVPVLLFFMASISITHA. C39 and C77 form a disulfide bridge.

It is found in the fimbrium. In terms of biological role, involved in the biosynthesis of K99 fimbriae. The sequence is that of Protein FanH (fanH) from Escherichia coli.